Here is a 399-residue protein sequence, read N- to C-terminus: uncharacterized protein (399 aa).

Belongs to the NADH:flavin oxidoreductase/NADH oxidase family. As to quaternary structure, directly interacts with lipoylated GcvH-L (SpyM50867).

This is an uncharacterized protein from Streptococcus pyogenes serotype M5 (strain Manfredo).